Reading from the N-terminus, the 276-residue chain is MSNRALIEEAFERRTQLTTEELSALVPPIETGLAALERGELRAARAQEGQWVCDTFVKKLILLSFLTRENTVGETNPGRPKSYDKLPLKFEQWDDAAFRDACIRVVPGAVVRAGAYIAPGAVLMPCFINIGAYVGEGTMIDTWSTVGSCAQVGSRCHISGGVGLGGVLEPIGDNPVVIEDNVFIGARSEVAEGVIVRSGAVIGMGVYLGASTPIIDRASGEVRFGEVPANAVVIAGNRADPKLPGVSLACAVIVKYVDERTRSKTALNDLVRALSR.

It belongs to the transferase hexapeptide repeat family. Pyridoxal 5'-phosphate is required as a cofactor.

The chain is Protein TabB (tabB) from Pseudomonas amygdali pv. tabaci (Pseudomonas syringae pv. tabaci).